A 456-amino-acid chain; its full sequence is GTP cyclohydrolase 1 (456 aa).

Zn(2+) contacts are provided by C340, H343, and C412.

Belongs to the GTP cyclohydrolase I family. Homodimer. As to expression, expressed in leaves and unripe fruits.

The catalysed reaction is GTP + H2O = 7,8-dihydroneopterin 3'-triphosphate + formate + H(+). It participates in cofactor biosynthesis; 7,8-dihydroneopterin triphosphate biosynthesis; 7,8-dihydroneopterin triphosphate from GTP: step 1/1. GTP cyclohydrolase 1 is the first enzyme in the biosynthetic pathway leading to folic acid. This chain is GTP cyclohydrolase 1 (GCH1), found in Solanum lycopersicum (Tomato).